We begin with the raw amino-acid sequence, 83 residues long: Mu-theraphotoxin-Hhn2j 4 (83 aa).

An N-terminal signal peptide occupies residues 1–21 (MKASMFLALAGLVLLFVVGYA). Positions 22–48 (SESEEKEFPIELLSKIFAVDVFKGEGR) are excised as a propeptide. 3 disulfide bridges follow: C50–C65, C57–C70, and C64–C77. A Leucine amide modification is found at L81.

Belongs to the neurotoxin 10 (Hwtx-1) family. 15 (Hntx-3) subfamily. Monomer. Expressed by the venom gland.

The protein localises to the secreted. Its function is as follows. Lethal neurotoxin. Selectively blocks tetrodotoxin-sensitive voltage-gated sodium channels (Nav). Does not affect tetrodotoxin-resistant voltage-gated sodium channels or calcium channels. In Cyriopagopus hainanus (Chinese bird spider), this protein is Mu-theraphotoxin-Hhn2j 4.